A 273-amino-acid chain; its full sequence is Dermonecrotic toxin LhSicTox-alphaIA2biv (273 aa).

His5 is a catalytic residue. Mg(2+)-binding residues include Glu25 and Asp27. His41 functions as the Nucleophile in the catalytic mechanism. 2 disulfide bridges follow: Cys45-Cys51 and Cys47-Cys190. Asp85 serves as a coordination point for Mg(2+).

It belongs to the arthropod phospholipase D family. Class II subfamily. Mg(2+) serves as cofactor. In terms of tissue distribution, expressed by the venom gland.

The protein localises to the secreted. The enzyme catalyses an N-(acyl)-sphingosylphosphocholine = an N-(acyl)-sphingosyl-1,3-cyclic phosphate + choline. It carries out the reaction an N-(acyl)-sphingosylphosphoethanolamine = an N-(acyl)-sphingosyl-1,3-cyclic phosphate + ethanolamine. It catalyses the reaction a 1-acyl-sn-glycero-3-phosphocholine = a 1-acyl-sn-glycero-2,3-cyclic phosphate + choline. The catalysed reaction is a 1-acyl-sn-glycero-3-phosphoethanolamine = a 1-acyl-sn-glycero-2,3-cyclic phosphate + ethanolamine. Its function is as follows. Dermonecrotic toxins cleave the phosphodiester linkage between the phosphate and headgroup of certain phospholipids (sphingolipid and lysolipid substrates), forming an alcohol (often choline) and a cyclic phosphate. This toxin acts on sphingomyelin (SM). It may also act on ceramide phosphoethanolamine (CPE), lysophosphatidylcholine (LPC) and lysophosphatidylethanolamine (LPE), but not on lysophosphatidylserine (LPS), and lysophosphatidylglycerol (LPG). It acts by transphosphatidylation, releasing exclusively cyclic phosphate products as second products. Induces dermonecrosis, hemolysis, increased vascular permeability, edema, inflammatory response, and platelet aggregation. This chain is Dermonecrotic toxin LhSicTox-alphaIA2biv, found in Loxosceles hirsuta (Recluse spider).